Consider the following 518-residue polypeptide: Xylose import ATP-binding protein XylG (518 aa).

2 consecutive ABC transporter domains span residues L6–E245 and F262–S507. G38–S45 is a binding site for ATP.

Belongs to the ABC transporter superfamily. Xylose importer (TC 3.A.1.2.4) family. The complex is composed of two ATP-binding proteins (XylG), two transmembrane proteins (XylH) and a solute-binding protein (XylF).

Its subcellular location is the cell inner membrane. It catalyses the reaction D-xylose(out) + ATP + H2O = D-xylose(in) + ADP + phosphate + H(+). Its function is as follows. Part of the ABC transporter complex XylFGH involved in xylose import. Responsible for energy coupling to the transport system. This is Xylose import ATP-binding protein XylG from Pseudomonas syringae pv. syringae (strain B728a).